Consider the following 628-residue polypeptide: DNA mismatch repair protein MutL (628 aa).

Residues 334-367 (SDFAQPSADNMPKPESPGAPAAHGRKDDAPAAHA) are disordered. Residues 357–367 (GRKDDAPAAHA) are compositionally biased toward basic and acidic residues.

It belongs to the DNA mismatch repair MutL/HexB family.

Functionally, this protein is involved in the repair of mismatches in DNA. It is required for dam-dependent methyl-directed DNA mismatch repair. May act as a 'molecular matchmaker', a protein that promotes the formation of a stable complex between two or more DNA-binding proteins in an ATP-dependent manner without itself being part of a final effector complex. The protein is DNA mismatch repair protein MutL of Opitutus terrae (strain DSM 11246 / JCM 15787 / PB90-1).